A 24-amino-acid polypeptide reads, in one-letter code: Lycosin-I (24 aa).

This sequence belongs to the cationic peptide 04 (cupiennin) family. 05 subfamily. Monomer in solution. Small size oligomers on the lipid membranes.

The protein resides in the secreted. It localises to the target cell membrane. In terms of biological role, antimicrobial peptide that inhibits many reference strains of bacteria and fungi. Is potent against Candida species and multidrug-resistant Acinetobacter baumannii (MDRAB). Is probably localized in the cytoplasm after being transported through the cell wall and membrane. Is able to interact with cell membranes and enter into cell plasma to activate the mitochondrial death pathway to sensitize cancer cells for apoptosis, as well as up-regulates p27 to inhibit cell proliferation. It shows very low effect on normal cells, such as erythrocytes, Hek293t cells. It also potently inhibits tumor cell growth in vitro, and suppresses various tumor growth in vivo when tested in human cancer xenograft models. It interacts with the cell membrane and is then internalized into the cytoplasm of cancer cells to initiate the programmable cell death. In addition, this peptide has the therapeutic effects of anti-hypertension by endothelium-dependent vasodilatation via the NO/sGC/cGMP signaling pathway. In vivo, this peptide also shows a significant ability to inhibit T.gondii invasion and proliferation, making it a potential alternative agent for the treatment of toxoplasmosis. This is Lycosin-I from Lycosa singoriensis (Wolf spider).